Here is a 379-residue protein sequence, read N- to C-terminus: Probable purine permease 11 (379 aa).

Helical transmembrane passes span 43–63 (WVLVSVNIFFLIGGQAASVLL), 76–96 (WMATLVQTAAFPILYIPLLLL), 114–134 (IVLIYVLLGVIIAGDNMLYSV), 144–164 (YSLICATQLAFNAVFSYFINA), 167–187 (FTALILNSVVLLSFSAALIAL), 203–223 (IVGFVCTLAASALYSLLLSLM), 239–259 (VLEMQIYTSLVATCVSVIGLF), 294–313 (VCSVGVVGLIFLVTSLFSNV), 314–330 (ISTLSLAVTPLAALVVF), and 334–354 (MSGVKIMAMLIAIWGFASYVY).

It belongs to the purine permeases (TC 2.A.7.14) family. In terms of assembly, may form a complex with the potassium channel subunit KAT1.

Its subcellular location is the membrane. The sequence is that of Probable purine permease 11 (PUP11) from Arabidopsis thaliana (Mouse-ear cress).